The following is a 669-amino-acid chain: UvrABC system protein B (669 aa).

Positions 26–183 (TNFHAGIAKQ…RHLTELQYTR (158 aa)) constitute a Helicase ATP-binding domain. 39-46 (GVTGSGKT) contributes to the ATP binding site. The Beta-hairpin motif lies at 92 to 115 (YYDYYQPEAYVPASDTFIEKDSSI). The Helicase C-terminal domain maps to 431 to 597 (QVDDLISQIN…SVVRPISDIL (167 aa)). Residues 631-666 (AAQMKMLEQQMYQHARDLEFEDAARIRDQIQRLREA) form the UVR domain.

This sequence belongs to the UvrB family. In terms of assembly, forms a heterotetramer with UvrA during the search for lesions. Interacts with UvrC in an incision complex.

It localises to the cytoplasm. The UvrABC repair system catalyzes the recognition and processing of DNA lesions. A damage recognition complex composed of 2 UvrA and 2 UvrB subunits scans DNA for abnormalities. Upon binding of the UvrA(2)B(2) complex to a putative damaged site, the DNA wraps around one UvrB monomer. DNA wrap is dependent on ATP binding by UvrB and probably causes local melting of the DNA helix, facilitating insertion of UvrB beta-hairpin between the DNA strands. Then UvrB probes one DNA strand for the presence of a lesion. If a lesion is found the UvrA subunits dissociate and the UvrB-DNA preincision complex is formed. This complex is subsequently bound by UvrC and the second UvrB is released. If no lesion is found, the DNA wraps around the other UvrB subunit that will check the other stand for damage. The polypeptide is UvrABC system protein B (Xylella fastidiosa (strain M12)).